Here is a 145-residue protein sequence, read N- to C-terminus: Protein phosphatase 1 regulatory subunit 14D (145 aa).

Positions 1–14 (MLSSSPASCTSPSP) are enriched in low complexity. The disordered stretch occupies residues 1 to 59 (MLSSSPASCTSPSPDGENPCKKVHWASGRRRTSSTDSESKSHPDSSKIPRSRRPSRLTV). Residues 21–25 (KKVHW) are interaction with protein phosphatase 1. Over residues 21–32 (KKVHWASGRRRT) the composition is skewed to basic residues. A compositionally biased stretch (basic and acidic residues) spans 37-47 (SESKSHPDSSK). Thr-58 is subject to Phosphothreonine.

Belongs to the PP1 inhibitor family. Phosphorylated on several residues. In terms of tissue distribution, detected in colon, intestine, kidney and brain cortex.

Its subcellular location is the cytoplasm. Inhibitor of PPP1CA. Has inhibitory activity only when phosphorylated, creating a molecular switch for regulating the phosphorylation status of PPP1CA substrates and smooth muscle contraction. The polypeptide is Protein phosphatase 1 regulatory subunit 14D (PPP1R14D) (Homo sapiens (Human)).